Here is a 424-residue protein sequence, read N- to C-terminus: Glutamate-1-semialdehyde 2,1-aminomutase (424 aa).

The residue at position 263 (lysine 263) is an N6-(pyridoxal phosphate)lysine.

It belongs to the class-III pyridoxal-phosphate-dependent aminotransferase family. HemL subfamily. As to quaternary structure, homodimer. Pyridoxal 5'-phosphate serves as cofactor.

The protein resides in the cytoplasm. It catalyses the reaction (S)-4-amino-5-oxopentanoate = 5-aminolevulinate. It functions in the pathway porphyrin-containing compound metabolism; protoporphyrin-IX biosynthesis; 5-aminolevulinate from L-glutamyl-tRNA(Glu): step 2/2. The polypeptide is Glutamate-1-semialdehyde 2,1-aminomutase (Campylobacter jejuni subsp. jejuni serotype O:6 (strain 81116 / NCTC 11828)).